Consider the following 490-residue polypeptide: Cytochrome P450 2C9 (490 aa).

Residue C435 coordinates heme.

Belongs to the cytochrome P450 family. Heme serves as cofactor.

It is found in the endoplasmic reticulum membrane. The protein localises to the microsome membrane. It catalyses the reaction an organic molecule + reduced [NADPH--hemoprotein reductase] + O2 = an alcohol + oxidized [NADPH--hemoprotein reductase] + H2O + H(+). It carries out the reaction (5Z,8Z,11Z,14Z)-eicosatetraenoate + reduced [NADPH--hemoprotein reductase] + O2 = (8R,9S)-epoxy-(5Z,11Z,14Z)-eicosatrienoate + oxidized [NADPH--hemoprotein reductase] + H2O + H(+). The enzyme catalyses (5Z,8Z,11Z,14Z)-eicosatetraenoate + reduced [NADPH--hemoprotein reductase] + O2 = (8S,9R)-epoxy-(5Z,11Z,14Z)-eicosatrienoate + oxidized [NADPH--hemoprotein reductase] + H2O + H(+). The catalysed reaction is (5Z,8Z,11Z,14Z)-eicosatetraenoate + reduced [NADPH--hemoprotein reductase] + O2 = (11R,12S)-epoxy-(5Z,8Z,14Z)-eicosatrienoate + oxidized [NADPH--hemoprotein reductase] + H2O + H(+). It catalyses the reaction (5Z,8Z,11Z,14Z)-eicosatetraenoate + reduced [NADPH--hemoprotein reductase] + O2 = (11S,12R)-epoxy-(5Z,8Z,14Z)-eicosatrienoate + oxidized [NADPH--hemoprotein reductase] + H2O + H(+). It carries out the reaction (5Z,8Z,11Z,14Z)-eicosatetraenoate + reduced [NADPH--hemoprotein reductase] + O2 = (14R,15S)-epoxy-(5Z,8Z,11Z)-eicosatrienoate + oxidized [NADPH--hemoprotein reductase] + H2O + H(+). The enzyme catalyses (5Z,8Z,11Z,14Z)-eicosatetraenoate + reduced [NADPH--hemoprotein reductase] + O2 = (14S,15R)-epoxy-(5Z,8Z,11Z)-eicosatrienoate + oxidized [NADPH--hemoprotein reductase] + H2O + H(+). The catalysed reaction is (5Z,8Z,11Z,14Z,17Z)-eicosapentaenoate + reduced [NADPH--hemoprotein reductase] + O2 = 8,9-epoxy-(5Z,11Z,14Z,17Z)-eicosatetraenoate + oxidized [NADPH--hemoprotein reductase] + H2O + H(+). It catalyses the reaction (5Z,8Z,11Z,14Z,17Z)-eicosapentaenoate + reduced [NADPH--hemoprotein reductase] + O2 = 11,12-epoxy-(5Z,8Z,14Z,17Z)-eicosatetraenoate + oxidized [NADPH--hemoprotein reductase] + H2O + H(+). It carries out the reaction (5Z,8Z,11Z,14Z,17Z)-eicosapentaenoate + reduced [NADPH--hemoprotein reductase] + O2 = 14,15-epoxy-(5Z,8Z,11Z,17Z)-eicosatetraenoate + oxidized [NADPH--hemoprotein reductase] + H2O + H(+). The enzyme catalyses (5Z,8Z,11Z,14Z,17Z)-eicosapentaenoate + reduced [NADPH--hemoprotein reductase] + O2 = (17R,18S)-epoxy-(5Z,8Z,11Z,14Z)-eicosatetraenoate + oxidized [NADPH--hemoprotein reductase] + H2O + H(+). The catalysed reaction is cholesterol + reduced [NADPH--hemoprotein reductase] + O2 = 25-hydroxycholesterol + oxidized [NADPH--hemoprotein reductase] + H2O + H(+). It catalyses the reaction 17beta-estradiol + reduced [NADPH--hemoprotein reductase] + O2 = 2-hydroxy-17beta-estradiol + oxidized [NADPH--hemoprotein reductase] + H2O + H(+). It carries out the reaction estrone + reduced [NADPH--hemoprotein reductase] + O2 = 2-hydroxyestrone + oxidized [NADPH--hemoprotein reductase] + H2O + H(+). The enzyme catalyses (5Z,8Z,11Z,14Z)-eicosatetraenoate + reduced [NADPH--hemoprotein reductase] + O2 = (11R)-hydroxy-(5Z,8Z,12E,14Z)-eicosatetraenoate + oxidized [NADPH--hemoprotein reductase] + H2O + H(+). The catalysed reaction is (5Z,8Z,11Z,14Z)-eicosatetraenoate + reduced [NADPH--hemoprotein reductase] + O2 = (12R)-hydroxy-(5Z,8Z,10E,14Z)-eicosatetraenoate + oxidized [NADPH--hemoprotein reductase] + H2O + H(+). It catalyses the reaction (5Z,8Z,11Z,14Z)-eicosatetraenoate + reduced [NADPH--hemoprotein reductase] + O2 = (15R)-hydroxy-(5Z,8Z,11Z,13E)-eicosatetraenoate + oxidized [NADPH--hemoprotein reductase] + H2O + H(+). It carries out the reaction (5Z,8Z,11Z,14Z)-eicosatetraenoate + reduced [NADPH--hemoprotein reductase] + O2 = 10-hydroxy-(5Z,8Z,11Z,14Z)-eicosatetraenoate + oxidized [NADPH--hemoprotein reductase] + H2O + H(+). The enzyme catalyses (9Z,12Z)-octadecadienoate + reduced [NADPH--hemoprotein reductase] + O2 = (13R)-hydroxy-(9Z,11E)-octadecadienoate + oxidized [NADPH--hemoprotein reductase] + H2O + H(+). The catalysed reaction is (9Z,12Z)-octadecadienoate + reduced [NADPH--hemoprotein reductase] + O2 = (9R)-hydroxy-(10E,12Z)-octadecadienoate + oxidized [NADPH--hemoprotein reductase] + H2O + H(+). It catalyses the reaction (5Z,8Z,11Z,14Z)-eicosatetraenoate + reduced [NADPH--hemoprotein reductase] + O2 = 19-hydroxy-(5Z,8Z,11Z,14Z)-eicosatetraenoate + oxidized [NADPH--hemoprotein reductase] + H2O + H(+). It carries out the reaction (5Z,8Z,11Z,14Z)-eicosatetraenoate + reduced [NADPH--hemoprotein reductase] + O2 = 13(S)-hydroxy-(5Z,8Z,11Z,14Z)-eicosatetraenoate + oxidized [NADPH--hemoprotein reductase] + H2O + H(+). The enzyme catalyses (5Z,8Z,11Z,14Z)-eicosatetraenoate + reduced [NADPH--hemoprotein reductase] + O2 = 14,15-epoxy-(5Z,8Z,11Z)-eicosatrienoate + oxidized [NADPH--hemoprotein reductase] + H2O + H(+). The catalysed reaction is (5Z,8Z,11Z,14Z)-eicosatetraenoate + reduced [NADPH--hemoprotein reductase] + O2 = 11,12-epoxy-(5Z,8Z,14Z)-eicosatrienoate + oxidized [NADPH--hemoprotein reductase] + H2O + H(+). It catalyses the reaction (5Z,8Z,11Z,14Z)-eicosatetraenoate + reduced [NADPH--hemoprotein reductase] + O2 = 13-hydroxy-(5Z,8Z,11Z,14Z)-eicosatetraenoate + oxidized [NADPH--hemoprotein reductase] + H2O + H(+). It carries out the reaction (4R)-limonene + reduced [NADPH--hemoprotein reductase] + O2 = (1R,5S)-carveol + oxidized [NADPH--hemoprotein reductase] + H2O + H(+). The enzyme catalyses (4S)-limonene + reduced [NADPH--hemoprotein reductase] + O2 = (1S,5R)-carveol + oxidized [NADPH--hemoprotein reductase] + H2O + H(+). The catalysed reaction is (4S)-limonene + reduced [NADPH--hemoprotein reductase] + O2 = (4S)-perillyl alcohol + oxidized [NADPH--hemoprotein reductase] + H2O + H(+). Its pathway is lipid metabolism; arachidonate metabolism. The protein operates within steroid metabolism; cholesterol metabolism. It functions in the pathway terpene metabolism; (4R)-limonene degradation. In terms of biological role, a cytochrome P450 monooxygenase involved in the metabolism of various endogenous substrates, including fatty acids and steroids. Mechanistically, uses molecular oxygen inserting one oxygen atom into a substrate, and reducing the second into a water molecule, with two electrons provided by NADPH via cytochrome P450 reductase (NADPH--hemoprotein reductase). Catalyzes the epoxidation of double bonds of polyunsaturated fatty acids (PUFA). Catalyzes the hydroxylation of carbon-hydrogen bonds. Metabolizes cholesterol toward 25-hydroxycholesterol, a physiological regulator of cellular cholesterol homeostasis. Exhibits low catalytic activity for the formation of catechol estrogens from 17beta-estradiol (E2) and estrone (E1), namely 2-hydroxy E1 and E2. Catalyzes bisallylic hydroxylation and hydroxylation with double-bond migration of polyunsaturated fatty acids (PUFA). Also metabolizes plant monoterpenes such as limonene. Oxygenates (R)- and (S)-limonene to produce carveol and perillyl alcohol. Contributes to the wide pharmacokinetics variability of the metabolism of drugs such as S-warfarin, diclofenac, phenytoin, tolbutamide and losartan. This chain is Cytochrome P450 2C9, found in Homo sapiens (Human).